The following is a 577-amino-acid chain: Aspartate--tRNA(Asp/Asn) ligase (577 aa).

Glu-171 lines the L-aspartate pocket. An aspartate region spans residues 195–198 (QLFK). Arg-217 lines the L-aspartate pocket. ATP contacts are provided by residues 217–219 (RDE) and Gln-226. His-444 serves as a coordination point for L-aspartate. Glu-474 serves as a coordination point for ATP. Arg-481 is an L-aspartate binding site. 526 to 529 (GFDR) lines the ATP pocket.

Belongs to the class-II aminoacyl-tRNA synthetase family. Type 1 subfamily. Homodimer.

Its subcellular location is the cytoplasm. The enzyme catalyses tRNA(Asx) + L-aspartate + ATP = L-aspartyl-tRNA(Asx) + AMP + diphosphate. Aspartyl-tRNA synthetase with relaxed tRNA specificity since it is able to aspartylate not only its cognate tRNA(Asp) but also tRNA(Asn). Reaction proceeds in two steps: L-aspartate is first activated by ATP to form Asp-AMP and then transferred to the acceptor end of tRNA(Asp/Asn). The protein is Aspartate--tRNA(Asp/Asn) ligase of Helicobacter pylori (strain G27).